The following is a 5104-amino-acid chain: Malformin synthetase mlfA (5104 aa).

Residues 225 to 616 (ERHAVNRPHS…CGRADTQVKL (392 aa)) are adenylation 1. The region spanning 757-830 (SRLEQEIQLA…EAASLAEVQE (74 aa)) is the Carrier 1 domain. The residue at position 791 (Ser-791) is an O-(pantetheine 4'-phosphoryl)serine. Positions 868 to 1299 (EDVFPCTTMQ…ALNTLSLLQA (432 aa)) are condensation 1. The adenylation 2 stretch occupies residues 1327–1716 (DRWVTRQPEG…GRKDTQVKLR (390 aa)). The 78-residue stretch at 1854–1931 (TPASELERTL…QLAAEFGGPA (78 aa)) folds into the Carrier 2 domain. At Ser-1891 the chain carries O-(pantetheine 4'-phosphoryl)serine. Disordered stretches follow at residues 1928–1961 (GGPAGQSASSASSTTEERFTFSTPDDSSTNDGVD) and 1998–2025 (TNKTPSVSSSSSSSSSSEKKKKAAKVDS). Composition is skewed to low complexity over residues 1934 to 1958 (SASSASSTTEERFTFSTPDDSSTND) and 2003 to 2013 (SVSSSSSSSSS). Residues 2066–2481 (EDIYPATPLQ…TVSYSDKEAL (416 aa)) form a condensation 2 region. Residues 2504 to 2896 (VRTPHAPAVC…IGRRDGQLKL (393 aa)) are adenylation 3. The Carrier 3 domain occupies 3032 to 3108 (RPVTSQEREM…QLICHLNTIR (77 aa)). The residue at position 3069 (Ser-3069) is an O-(pantetheine 4'-phosphoryl)serine. Condensation regions lie at residues 3125 to 3590 (WVAL…TYDQ) and 3611 to 4029 (NIYP…EQLV). The tract at residues 4054–4444 (HSSREAVCAW…VGRKDNQIKF (391 aa)) is adenylation 4. Residues 4578–4654 (MPSTAAERKM…DLSDQARSLI (77 aa)) enclose the Carrier 4 domain. The residue at position 4615 (Ser-4615) is an O-(pantetheine 4'-phosphoryl)serine. A condensation 5 region spans residues 4691–5018 (DVLPTTSFQR…LQTIVQHQNN (328 aa)).

This sequence belongs to the NRP synthetase family.

It functions in the pathway secondary metabolite biosynthesis. In terms of biological role, nonribosomal peptide synthetase; part of the gene cluster that mediates the biosynthesis of malformins, cyclic pentapeptides with a disulfide bond between 2 consecutive cysteins, that show potential anti-tumor as well as antimalarial and antitrypanosomal properties. The nonribosomal peptide synthetase mlfA is responsible of the formation of the cyclic pentapeptide. The malformin biosynthesis clusters in malformin-producing fungi also contain enzymes involved in the formation of the disulfide bond between the two consecutive cysteins within malformins, in addition to additional tailoring enzymes such as methyltransferases or oxidoreductases. They are also composed of up to 4 major facilitator superfamily transporters, and transcription factors probably involved in the regulation of the expression of those clusters. This chain is Malformin synthetase mlfA, found in Aspergillus vadensis (strain CBS 113365 / IMI 142717 / IBT 24658).